Here is a 605-residue protein sequence, read N- to C-terminus: DNA primase (605 aa).

The segment at 38-62 adopts a CHC2-type zinc-finger fold; it reads CPFHDEKTPSFTVSEDKQICHCFGC. A Toprim domain is found at 260–341; that stretch reads DEIVLLEGFM…NVFVIQLPSG (82 aa). Glu-266, Asp-310, and Asp-312 together coordinate Mg(2+).

Belongs to the DnaG primase family. In terms of assembly, monomer. Interacts with DnaB. Requires Zn(2+) as cofactor. The cofactor is Mg(2+).

The catalysed reaction is ssDNA + n NTP = ssDNA/pppN(pN)n-1 hybrid + (n-1) diphosphate.. RNA polymerase that catalyzes the synthesis of short RNA molecules used as primers for DNA polymerase during DNA replication. In Staphylococcus aureus (strain MW2), this protein is DNA primase.